Reading from the N-terminus, the 508-residue chain is MDQFQRNGNKHRSWQQFFLYPLFFREDLYAIAHDHHLDRSSSSEPTEILVSNFFSFLTVKRSIRRIRKQKNSISLFGNCSPNKFLGCNKNFYSKLILEGLTVVLEVSFAMRSKHFIEGMDGWNSIQSIHCIFPLMEDKLPHSNYISDIRVPYSIHPEILVRIFRRWIRDAPSLHLLRSILHEWKNSFSRENLQKALVTQRENTRFSLFLWNSYVYEFESFLVPFVKRFSHSQSLLYGSFPDRTHFDKKIKHIVIFPRKISTKRIWLLKDPFMHYVRYGERSLIALKGTHLQVKKCRYHLFHFWQCYFHLWFQPYRVCSLELSKTYSSFLGYFLHVKMKPLVVRAKMLDDLFITDLITIELNPIAPIRSILFFLAKEKFCDISGRPISKLSWTSLSDDDILDRFDRIWINLFYYYSGSINQDGLYHIKYILLLSCAKTLACKHKSTIRVVREELGSELFTKSFSKEREFISSSFSKTRSQRERIWNSDISQINPLANFWQKIQNKQIEN.

It belongs to the intron maturase 2 family. MatK subfamily.

It localises to the plastid. The protein localises to the chloroplast. Functionally, usually encoded in the trnK tRNA gene intron. Probably assists in splicing its own and other chloroplast group II introns. The sequence is that of Maturase K from Cunninghamia lanceolata (China fir).